The sequence spans 224 residues: Protein LURP-one-related 1 (224 aa).

The disordered stretch occupies residues 1-23 (MQQPYEYRYPQGTGPSAPPPPPK).

It belongs to the LOR family.

Its function is as follows. Might be related to the phospholipid scramblase and tubby-like superfamily of membrane tethered transcription factors. The sequence is that of Protein LURP-one-related 1 from Arabidopsis thaliana (Mouse-ear cress).